The following is a 211-amino-acid chain: Large ribosomal subunit protein uL3 (211 aa).

The protein belongs to the universal ribosomal protein uL3 family. In terms of assembly, part of the 50S ribosomal subunit. Forms a cluster with proteins L14 and L19.

One of the primary rRNA binding proteins, it binds directly near the 3'-end of the 23S rRNA, where it nucleates assembly of the 50S subunit. The sequence is that of Large ribosomal subunit protein uL3 from Akkermansia muciniphila (strain ATCC BAA-835 / DSM 22959 / JCM 33894 / BCRC 81048 / CCUG 64013 / CIP 107961 / Muc).